We begin with the raw amino-acid sequence, 49 residues long: Large ribosomal subunit protein bL33C (49 aa).

The protein belongs to the bacterial ribosomal protein bL33 family.

The polypeptide is Large ribosomal subunit protein bL33C (Lactococcus lactis subsp. cremoris (strain MG1363)).